The primary structure comprises 156 residues: Large ribosomal subunit protein uL15 (156 aa).

The segment covering 1 to 11 (MKLNDLRDKPG) has biased composition (basic and acidic residues). The interval 1–40 (MKLNDLRDKPGSVKARKRVGRGIGSGTGKTGGRGVKGQKS) is disordered. Residues 21–35 (RGIGSGTGKTGGRGV) show a composition bias toward gly residues.

The protein belongs to the universal ribosomal protein uL15 family. As to quaternary structure, part of the 50S ribosomal subunit.

Its function is as follows. Binds to the 23S rRNA. The sequence is that of Large ribosomal subunit protein uL15 from Brucella anthropi (strain ATCC 49188 / DSM 6882 / CCUG 24695 / JCM 21032 / LMG 3331 / NBRC 15819 / NCTC 12168 / Alc 37) (Ochrobactrum anthropi).